The primary structure comprises 488 residues: Serine/threonine-protein kinase 32C (488 aa).

A disordered region spans residues 1-56; that stretch reads MRSGAERRGSSAAAPPSSPPPGRARPAGSDVSPALPPPAASQPRARDAGDARAQPR. Residues S10, S17, and S18 each carry the phosphoserine modification. Residues 24-33 are compositionally biased toward low complexity; that stretch reads ARPAGSDVSP. Positions 94–354 constitute a Protein kinase domain; that stretch reads FQILRAIGKG…LQDMQTAPSL (261 aa). Residues 100–108 and K123 each bind ATP; that span reads IGKGSFGKV. The active-site Proton acceptor is the D217. A compositionally biased stretch (basic residues) spans 397 to 406; that stretch reads HKKKKRLAKN. Disordered regions lie at residues 397 to 420 and 443 to 488; these read HKKK…QSEN and KRSQ…SGSS.

This sequence belongs to the protein kinase superfamily. Ser/Thr protein kinase family. Mg(2+) is required as a cofactor.

It carries out the reaction L-seryl-[protein] + ATP = O-phospho-L-seryl-[protein] + ADP + H(+). It catalyses the reaction L-threonyl-[protein] + ATP = O-phospho-L-threonyl-[protein] + ADP + H(+). The chain is Serine/threonine-protein kinase 32C from Mus musculus (Mouse).